The sequence spans 574 residues: 2-succinyl-5-enolpyruvyl-6-hydroxy-3-cyclohexene-1-carboxylate synthase (574 aa).

Belongs to the TPP enzyme family. MenD subfamily. Homodimer. Mg(2+) serves as cofactor. Requires Mn(2+) as cofactor. It depends on thiamine diphosphate as a cofactor.

The catalysed reaction is isochorismate + 2-oxoglutarate + H(+) = 5-enolpyruvoyl-6-hydroxy-2-succinyl-cyclohex-3-ene-1-carboxylate + CO2. Its pathway is quinol/quinone metabolism; 1,4-dihydroxy-2-naphthoate biosynthesis; 1,4-dihydroxy-2-naphthoate from chorismate: step 2/7. It functions in the pathway quinol/quinone metabolism; menaquinone biosynthesis. In terms of biological role, catalyzes the thiamine diphosphate-dependent decarboxylation of 2-oxoglutarate and the subsequent addition of the resulting succinic semialdehyde-thiamine pyrophosphate anion to isochorismate to yield 2-succinyl-5-enolpyruvyl-6-hydroxy-3-cyclohexene-1-carboxylate (SEPHCHC). This Rubrobacter xylanophilus (strain DSM 9941 / JCM 11954 / NBRC 16129 / PRD-1) protein is 2-succinyl-5-enolpyruvyl-6-hydroxy-3-cyclohexene-1-carboxylate synthase.